The primary structure comprises 785 residues: Rho-GTPase-activating protein RGD3 (785 aa).

N-acetylserine is present on Ser-2. Residues 31 to 463 (ISLRNTYWTK…PQETANADVR (433 aa)) form the F-BAR domain. The disordered stretch occupies residues 313–340 (SNGNAGNRKKKSYGELTHSDNEHEEKSN). Positions 329–339 (THSDNEHEEKS) are enriched in basic and acidic residues. The region spanning 520–702 (IILRQIEKEP…TFFINERTVE (183 aa)) is the Rho-GAP domain. Residues 732 to 785 (TAPIHSTPKPPPNDKDGHFIPRPFKTSSTPTTPERPKRKSGLFLPINVNDVPST) form a disordered region. Ser-759 is modified (phosphoserine). Residues Thr-760, Thr-762, and Thr-763 each carry the phosphothreonine modification.

In terms of processing, phosphorylation at the C-terminus negatively regulates the activity and the polarized localization.

It is found in the cytoplasmic vesicle membrane. Its subcellular location is the cell membrane. It localises to the bud tip. The protein resides in the bud neck. GTPase activating protein (GAP) for RHO3 and CDC42 that binds membranes through phosphatidylinositol 4,5-bisphosphate. Plays a key role in cell polarity. Modulates the RHO3 distribution at the plasma membrane and its polarity during growth. The sequence is that of Rho-GTPase-activating protein RGD3 from Saccharomyces cerevisiae (strain ATCC 204508 / S288c) (Baker's yeast).